The primary structure comprises 236 residues: Large ribosomal subunit protein uL3 (236 aa).

Disordered regions lie at residues 132 to 153 (SNRA…GMAQ) and 200 to 236 (KGGD…KKGG). The segment covering 133–145 (NRASHGNSRSHNV) has biased composition (polar residues). Gln153 carries the N5-methylglutamine modification. Polar residues predominate over residues 206–216 (VSPSIRSARPT). The segment covering 217–228 (NNGNVNAAAKGG) has biased composition (low complexity).

The protein belongs to the universal ribosomal protein uL3 family. As to quaternary structure, part of the 50S ribosomal subunit. Forms a cluster with proteins L14 and L19. In terms of processing, methylated by PrmB.

One of the primary rRNA binding proteins, it binds directly near the 3'-end of the 23S rRNA, where it nucleates assembly of the 50S subunit. The protein is Large ribosomal subunit protein uL3 of Nitrosospira multiformis (strain ATCC 25196 / NCIMB 11849 / C 71).